The chain runs to 407 residues: Cysteine desulfurase (407 aa).

At K226 the chain carries N6-(pyridoxal phosphate)lysine. C364 functions as the Cysteine persulfide intermediate in the catalytic mechanism.

The protein belongs to the class-V pyridoxal-phosphate-dependent aminotransferase family. Csd subfamily. As to quaternary structure, homodimer. Interacts with SufE and the SufBCD complex composed of SufB, SufC and SufD. The interaction with SufE is required to mediate the direct transfer of the sulfur atom from the S-sulfanylcysteine. Pyridoxal 5'-phosphate is required as a cofactor.

The protein resides in the cytoplasm. It catalyses the reaction (sulfur carrier)-H + L-cysteine = (sulfur carrier)-SH + L-alanine. The enzyme catalyses L-selenocysteine + AH2 = hydrogenselenide + L-alanine + A + H(+). The protein operates within cofactor biosynthesis; iron-sulfur cluster biosynthesis. Functionally, cysteine desulfurases mobilize the sulfur from L-cysteine to yield L-alanine, an essential step in sulfur metabolism for biosynthesis of a variety of sulfur-containing biomolecules. Component of the suf operon, which is activated and required under specific conditions such as oxidative stress and iron limitation. Acts as a potent selenocysteine lyase in vitro, that mobilizes selenium from L-selenocysteine. Selenocysteine lyase activity is however unsure in vivo. The chain is Cysteine desulfurase from Pectobacterium carotovorum subsp. carotovorum (strain PC1).